The primary structure comprises 592 residues: Aspartate--tRNA ligase (592 aa).

Glu180 lines the L-aspartate pocket. The tract at residues 204–207 is aspartate; it reads QLFK. Arg226 contacts L-aspartate. ATP is bound by residues 226 to 228 and Gln235; that span reads RDE. His455 is a binding site for L-aspartate. Glu489 serves as a coordination point for ATP. Arg496 is an L-aspartate binding site. ATP is bound at residue 541-544; that stretch reads GFDR.

It belongs to the class-II aminoacyl-tRNA synthetase family. Type 1 subfamily. In terms of assembly, homodimer.

It localises to the cytoplasm. The catalysed reaction is tRNA(Asp) + L-aspartate + ATP = L-aspartyl-tRNA(Asp) + AMP + diphosphate. Its function is as follows. Catalyzes the attachment of L-aspartate to tRNA(Asp) in a two-step reaction: L-aspartate is first activated by ATP to form Asp-AMP and then transferred to the acceptor end of tRNA(Asp). This Clostridium tetani (strain Massachusetts / E88) protein is Aspartate--tRNA ligase.